A 1209-amino-acid chain; its full sequence is Putative lysine-specific demethylase JMJ16 (1209 aa).

In terms of domain architecture, JmjN spans 146–187; that stretch reads APVFYPSEEEFEDTLNYIAKIRPEAEKYGICRIVPPPSWKPP. The Nuclear localization signal signature appears at 217–224; it reads MKKISKLP. The JmjC domain occupies 361-527; the sequence is KYAKSGWNLN…HGQIAIELYC (167 aa). The Fe cation site is built by H407, E409, and H495. The Zn(2+) site is built by C617, C620, C631, C633, C640, H643, C648, and C650. The C5HC2 zinc-finger motif lies at 617-667; the sequence is CCICFFDLHLSAAGCRCSPEKYSCLTHVKELCSCPWVTKYFLFRYDIDELN. Residues 872–900 form a disordered region; sequence DTRNTISLPTNDQKTMRRDVPSSTSHAEV. Positions 875-884 are enriched in polar residues; that stretch reads NTISLPTNDQ. The FYR N-terminal domain occupies 974 to 1032; it reads VVRRINCNVEPLSYGCVLSGKSWCSRRAIFPKGFRSRVKYINILDPTNMCFYISEILDA. The region spanning 1034–1124 is the FYR C-terminal domain; that stretch reads RNSPLFMVYL…RVCTDYWDSR (91 aa).

This sequence belongs to the JARID1 histone demethylase family. As to quaternary structure, interacts with MMD1 in the nucleus of male meiocytes, especially on pachytene chromosomes. Fe(2+) is required as a cofactor. Confined to inflorescences.

It localises to the nucleus. It catalyses the reaction N(6),N(6),N(6)-trimethyl-L-lysyl(4)-[histone H3] + 2-oxoglutarate + O2 = N(6),N(6)-dimethyl-L-lysyl(4)-[histone H3] + formaldehyde + succinate + CO2. The enzyme catalyses N(6),N(6)-dimethyl-L-lysyl(4)-[histone H3] + 2-oxoglutarate + O2 = N(6)-methyl-L-lysyl(4)-[histone H3] + formaldehyde + succinate + CO2. It carries out the reaction N(6)-methyl-L-lysyl(4)-[histone H3] + 2-oxoglutarate + O2 = L-lysyl(4)-[histone H3] + formaldehyde + succinate + CO2. Functionally, functions as a histone H3 'Lys-4' (H3K4me) demethylase involved in the negative regulation of gene expression. Active on H3K4me1, H3K4me2 and H3K4me3. Not active on mono-, di- and trimethylated H3K9, H3K27 and H3K36 in somatic cells. However, also active on H3K9 when in complex with MMD1, a meiocyte-specific histone reader. Together with MMD1, promotes gene expression in male meiocytes in an H3K9me3-dependent manner, and contributes to meiotic chromosome condensation by triggering some condensin promoters (e.g. CAP-D3 and CAP-H). Together with JMJ14 and JMJ17, required for plant growth and development. Represses leaf senescence in an age-dependent manner by demethylating H3K4me3 activating histone marks at senescence-associated genes (SAGs) loci, including WRKY53 and SAG201, thus preventing their premature expression. This Arabidopsis thaliana (Mouse-ear cress) protein is Putative lysine-specific demethylase JMJ16.